Reading from the N-terminus, the 325-residue chain is Probable 2-ketogluconate reductase (325 aa).

NAD(+) is bound by residues 158–159, Thr211, 238–240, and Asp264; these read RI and ISR. Arg240 is a catalytic residue. Glu269 is an active-site residue. His288 serves as the catalytic Proton donor. An NAD(+)-binding site is contributed by 288-291; that stretch reads HIGS.

This sequence belongs to the D-isomer specific 2-hydroxyacid dehydrogenase family.

It catalyses the reaction D-gluconate + NADP(+) = 2-dehydro-D-gluconate + NADPH + H(+). The protein is Probable 2-ketogluconate reductase (yvcT) of Bacillus subtilis (strain 168).